The sequence spans 399 residues: Flavohemoprotein (399 aa).

Positions 1–138 constitute a Globin domain; sequence MLAEKTRSII…IADIFITVEK (138 aa). Thr22 bears the Phosphothreonine mark. His85 provides a ligand contact to heme b. Catalysis depends on charge relay system residues Tyr95 and Glu137. Positions 146–399 are reductase; sequence WPGWKPFDIT…FGPKMSTVQV (254 aa). The region spanning 147–264 is the FAD-binding FR-type domain; the sequence is PGWKPFDITA…SAPAGDFAIN (118 aa). Residues Tyr189 and 207-210 contribute to the FAD site; that span reads RHYS. 281 to 286 is a binding site for NADP(+); it reads GVGVTP. Position 389–392 (389–392) interacts with FAD; it reads PFGP.

The protein belongs to the globin family. Two-domain flavohemoproteins subfamily. It in the C-terminal section; belongs to the flavoprotein pyridine nucleotide cytochrome reductase family. FAD is required as a cofactor. The cofactor is heme b.

It is found in the cytoplasm. The catalysed reaction is 2 nitric oxide + NADPH + 2 O2 = 2 nitrate + NADP(+) + H(+). It catalyses the reaction 2 nitric oxide + NADH + 2 O2 = 2 nitrate + NAD(+) + H(+). Functionally, is involved in NO detoxification in an aerobic process, termed nitric oxide dioxygenase (NOD) reaction that utilizes O(2) and NAD(P)H to convert NO to nitrate, which protects the fungus from various noxious nitrogen compounds. Therefore, plays a central role in the inducible response to nitrosative stress. In the presence of oxygen and NADH, it has NADH oxidase activity, which leads to the generation of superoxide and H(2)O(2). Under anaerobic conditions, it also exhibits nitric oxide reductase and FAD reductase activities. However, all these reactions are much lower than NOD activity. In Saccharomyces cerevisiae (strain ATCC 204508 / S288c) (Baker's yeast), this protein is Flavohemoprotein (YHB1).